Here is a 475-residue protein sequence, read N- to C-terminus: Aspartyl/glutamyl-tRNA(Asn/Gln) amidotransferase subunit B (475 aa).

This sequence belongs to the GatB/GatE family. GatB subfamily. Heterotrimer of A, B and C subunits.

It catalyses the reaction L-glutamyl-tRNA(Gln) + L-glutamine + ATP + H2O = L-glutaminyl-tRNA(Gln) + L-glutamate + ADP + phosphate + H(+). It carries out the reaction L-aspartyl-tRNA(Asn) + L-glutamine + ATP + H2O = L-asparaginyl-tRNA(Asn) + L-glutamate + ADP + phosphate + 2 H(+). Allows the formation of correctly charged Asn-tRNA(Asn) or Gln-tRNA(Gln) through the transamidation of misacylated Asp-tRNA(Asn) or Glu-tRNA(Gln) in organisms which lack either or both of asparaginyl-tRNA or glutaminyl-tRNA synthetases. The reaction takes place in the presence of glutamine and ATP through an activated phospho-Asp-tRNA(Asn) or phospho-Glu-tRNA(Gln). The sequence is that of Aspartyl/glutamyl-tRNA(Asn/Gln) amidotransferase subunit B from Staphylococcus saprophyticus subsp. saprophyticus (strain ATCC 15305 / DSM 20229 / NCIMB 8711 / NCTC 7292 / S-41).